A 329-amino-acid polypeptide reads, in one-letter code: Pantothenate kinase (329 aa).

Residues Met1–Pro21 form a disordered region. Gly107–Ser114 provides a ligand contact to ATP.

It belongs to the prokaryotic pantothenate kinase family.

The protein resides in the cytoplasm. It catalyses the reaction (R)-pantothenate + ATP = (R)-4'-phosphopantothenate + ADP + H(+). The protein operates within cofactor biosynthesis; coenzyme A biosynthesis; CoA from (R)-pantothenate: step 1/5. This Streptomyces coelicolor (strain ATCC BAA-471 / A3(2) / M145) protein is Pantothenate kinase (coaA).